Here is a 173-residue protein sequence, read N- to C-terminus: Protein tyrosine phosphatase type IVA 3 (173 aa).

Residues 8–161 (APVEVSYKHM…YRPKQRLRFK (154 aa)) form the Tyrosine-protein phosphatase domain. Cys49 and Cys104 form a disulfide bridge. Residue Asp72 is the Proton donor of the active site. Cys104 serves as the catalytic Phosphocysteine intermediate. Arg110 provides a ligand contact to substrate. The residue at position 170 (Cys170) is a Cysteine methyl ester. The S-farnesyl cysteine moiety is linked to residue Cys170. A propeptide spans 171–173 (CVM) (removed in mature form).

The protein belongs to the protein-tyrosine phosphatase family. In terms of assembly, interacts with tubulin. Farnesylated. Farnesylation is required for membrane targeting. Mainly expressed in cardiomyocytes and skeletal muscle; also found in pancreas. Consistently overexpressed in colon cancer metastasis.

It localises to the cell membrane. The protein localises to the early endosome. The enzyme catalyses O-phospho-L-tyrosyl-[protein] + H2O = L-tyrosyl-[protein] + phosphate. Inhibited by sodium orthovanadate and peroxovanadium compounds, and by pentamidine. In terms of biological role, protein tyrosine phosphatase which stimulates progression from G1 into S phase during mitosis. Enhances cell proliferation, cell motility and invasive activity, and promotes cancer metastasis. May be involved in the progression of cardiac hypertrophy by inhibiting intracellular calcium mobilization in response to angiotensin II. The protein is Protein tyrosine phosphatase type IVA 3 (PTP4A3) of Homo sapiens (Human).